Here is a 240-residue protein sequence, read N- to C-terminus: MADS-box transcription factor 27 (240 aa).

In terms of domain architecture, MADS-box spans Met-1–Ser-61. In terms of domain architecture, K-box spans Leu-86 to Glu-176. Residues Leu-220–Ala-231 show a composition bias toward polar residues. Residues Leu-220 to Pro-240 are disordered.

Ubiquitous.

Its subcellular location is the nucleus. Functionally, probable transcription factor. The sequence is that of MADS-box transcription factor 27 (MADS27) from Oryza sativa subsp. japonica (Rice).